The sequence spans 419 residues: MDSIKNLIVTLGENAKNAAKTLRCATTVAKNNTLINIASQIDQNRASIFKANNQDLVNGKNKGLETTLLDRLMLDEERLNGVIESLNQIINLPDPIGEITDLKYQPSGIQVGKMRVPLGVLGIIYESRPNVTIDAAALCLKSGNSVILRGGSEAIHSNYALYTCVRQGIKQAGLNENCAQLINTQNHEAVIELVKASDYVDAIIPRGGKGLVEAISNSAKTPVIKHLNGICHTYIDKDADKKKAISIAFNAKTRRYGVCNATETLLVHACAVSRILPKLIAQYLTKGVELRGCKETLKLSNKIIAATEKDWNTEYLDAILSIRIVNSMSEAIKHIDKHGSGHTESIVSENYTRSRRFITEVDSASVMINASTGFADGFEYGLGAEIGISTDKFHVRGPVGLEGLTSQKFIVLGDGHIRQ.

The protein belongs to the gamma-glutamyl phosphate reductase family.

The protein resides in the cytoplasm. The catalysed reaction is L-glutamate 5-semialdehyde + phosphate + NADP(+) = L-glutamyl 5-phosphate + NADPH + H(+). It participates in amino-acid biosynthesis; L-proline biosynthesis; L-glutamate 5-semialdehyde from L-glutamate: step 2/2. Its function is as follows. Catalyzes the NADPH-dependent reduction of L-glutamate 5-phosphate into L-glutamate 5-semialdehyde and phosphate. The product spontaneously undergoes cyclization to form 1-pyrroline-5-carboxylate. The protein is Gamma-glutamyl phosphate reductase of Ruthia magnifica subsp. Calyptogena magnifica.